The chain runs to 172 residues: MVKYSRDPSNPTKSAKACGKDLRVHFKNTRETAFALRRMPLGKAKRYLEDVLAHKQAIPFRRYCRGVGRTAQVKNRQPNGQGRWPAKSAQFVLDLLKNAESNAEVKGLDVDNLYISHIQVNQAQKQRRRTYRAHGRINPYMSNPCHIELILSEKEEPVKKEADNVVAPRKAI.

It belongs to the universal ribosomal protein uL22 family.

In Hordeum vulgare (Barley), this protein is Large ribosomal subunit protein uL22y.